The primary structure comprises 210 residues: MAALSSATKRLGRLIPHSSVLFVCDVQEVFRGLTFQLPTVIHGTNTMVSAAKLLNVPVVVTTQYGSRLGSTVSEISKNLEDAPDVKVFDKMKFSMLVPEVERHLTTNMPQRKSVLLCGIETHVCVLQTCLDLLDKGYDVHVVSDAVSSSTSYNRSMALERIRQSGAYITSVESAIFQLANDAGNPEFKSISKLIKEHLKVQNGFDTGARI.

Residues aspartate 25, lysine 90, and cysteine 124 contribute to the active site.

Belongs to the isochorismatase family.

It is found in the secreted. The protein resides in the host cytoplasm. The protein localises to the host nucleus. It catalyses the reaction isochorismate + H2O = (2S,3S)-2,3-dihydroxy-2,3-dihydrobenzoate + pyruvate. Its function is as follows. Secreted isochorismatase required for full virulence of P.sojae. Suppresses salicylate-mediated innate immunity of the host by disrupting the plant salicylate metabolism pathway via hydrolysis of its isochorismate precursor. This is Secreted isochorismatase effector Isc1 from Phytophthora sojae (strain P6497) (Soybean stem and root rot agent).